Reading from the N-terminus, the 212-residue chain is Thymidylate kinase (212 aa).

10–17 (GLEGAGKT) provides a ligand contact to ATP.

It belongs to the thymidylate kinase family.

It catalyses the reaction dTMP + ATP = dTDP + ADP. Phosphorylation of dTMP to form dTDP in both de novo and salvage pathways of dTTP synthesis. This chain is Thymidylate kinase, found in Yersinia pestis bv. Antiqua (strain Antiqua).